Consider the following 290-residue polypeptide: Diaminopimelate epimerase (290 aa).

3 residues coordinate substrate: asparagine 17, glutamine 49, and asparagine 69. The Proton donor role is filled by cysteine 78. Substrate is bound by residues 79–80 (GN), asparagine 166, asparagine 199, and 217–218 (ER). The active-site Proton acceptor is cysteine 226. Substrate is bound at residue 227–228 (GS).

This sequence belongs to the diaminopimelate epimerase family. In terms of assembly, homodimer.

It is found in the cytoplasm. The catalysed reaction is (2S,6S)-2,6-diaminopimelate = meso-2,6-diaminopimelate. Its pathway is amino-acid biosynthesis; L-lysine biosynthesis via DAP pathway; DL-2,6-diaminopimelate from LL-2,6-diaminopimelate: step 1/1. Functionally, catalyzes the stereoinversion of LL-2,6-diaminopimelate (L,L-DAP) to meso-diaminopimelate (meso-DAP), a precursor of L-lysine and an essential component of the bacterial peptidoglycan. The chain is Diaminopimelate epimerase from Nitrobacter hamburgensis (strain DSM 10229 / NCIMB 13809 / X14).